The sequence spans 322 residues: ATP-dependent 6-phosphofructokinase (322 aa).

ATP is bound by residues glycine 12, 73–74 (RF), and 103–106 (GDGT). Mg(2+) is bound at residue aspartate 104. 126–128 (TID) lines the substrate pocket. Residue aspartate 128 is the Proton acceptor of the active site. Arginine 155 contributes to the ADP binding site. Residues arginine 163 and 170–172 (MGR) contribute to the substrate site. ADP is bound by residues 186–188 (GSE), lysine 212, and 214–216 (KPS). Substrate contacts are provided by residues glutamate 223, arginine 245, and 251–254 (HTQR).

Belongs to the phosphofructokinase type A (PFKA) family. ATP-dependent PFK group I subfamily. Prokaryotic clade 'B1' sub-subfamily. As to quaternary structure, homotetramer. It depends on Mg(2+) as a cofactor.

It is found in the cytoplasm. It carries out the reaction beta-D-fructose 6-phosphate + ATP = beta-D-fructose 1,6-bisphosphate + ADP + H(+). It functions in the pathway carbohydrate degradation; glycolysis; D-glyceraldehyde 3-phosphate and glycerone phosphate from D-glucose: step 3/4. Its activity is regulated as follows. Allosterically activated by ADP and other diphosphonucleosides, and allosterically inhibited by phosphoenolpyruvate. Catalyzes the phosphorylation of D-fructose 6-phosphate to fructose 1,6-bisphosphate by ATP, the first committing step of glycolysis. In Mesomycoplasma hyopneumoniae (strain J / ATCC 25934 / NCTC 10110) (Mycoplasma hyopneumoniae), this protein is ATP-dependent 6-phosphofructokinase.